We begin with the raw amino-acid sequence, 700 residues long: Elongation factor G (700 aa).

In terms of domain architecture, tr-type G spans 8-290 (DRYRNVGIMA…AMIMYMPSPL (283 aa)). GTP is bound by residues 17–24 (AHIDAGKT), 88–92 (DTPGH), and 142–145 (NKMD).

The protein belongs to the TRAFAC class translation factor GTPase superfamily. Classic translation factor GTPase family. EF-G/EF-2 subfamily.

It localises to the cytoplasm. Catalyzes the GTP-dependent ribosomal translocation step during translation elongation. During this step, the ribosome changes from the pre-translocational (PRE) to the post-translocational (POST) state as the newly formed A-site-bound peptidyl-tRNA and P-site-bound deacylated tRNA move to the P and E sites, respectively. Catalyzes the coordinated movement of the two tRNA molecules, the mRNA and conformational changes in the ribosome. The sequence is that of Elongation factor G from Vesicomyosocius okutanii subsp. Calyptogena okutanii (strain HA).